Reading from the N-terminus, the 175-residue chain is ATP synthase subunit delta (175 aa).

The protein belongs to the ATPase delta chain family. As to quaternary structure, F-type ATPases have 2 components, F(1) - the catalytic core - and F(0) - the membrane proton channel. F(1) has five subunits: alpha(3), beta(3), gamma(1), delta(1), epsilon(1). F(0) has three main subunits: a(1), b(2) and c(10-14). The alpha and beta chains form an alternating ring which encloses part of the gamma chain. F(1) is attached to F(0) by a central stalk formed by the gamma and epsilon chains, while a peripheral stalk is formed by the delta and b chains.

The protein resides in the cell membrane. F(1)F(0) ATP synthase produces ATP from ADP in the presence of a proton or sodium gradient. F-type ATPases consist of two structural domains, F(1) containing the extramembraneous catalytic core and F(0) containing the membrane proton channel, linked together by a central stalk and a peripheral stalk. During catalysis, ATP synthesis in the catalytic domain of F(1) is coupled via a rotary mechanism of the central stalk subunits to proton translocation. Functionally, this protein is part of the stalk that links CF(0) to CF(1). It either transmits conformational changes from CF(0) to CF(1) or is implicated in proton conduction. The protein is ATP synthase subunit delta of Stenotrophomonas maltophilia (strain K279a).